We begin with the raw amino-acid sequence, 142 residues long: UPF0102 protein Bcep1808_0248 (142 aa).

This sequence belongs to the UPF0102 family.

The protein is UPF0102 protein Bcep1808_0248 of Burkholderia vietnamiensis (strain G4 / LMG 22486) (Burkholderia cepacia (strain R1808)).